We begin with the raw amino-acid sequence, 471 residues long: UDP-N-acetylmuramate--L-alanine ligase (471 aa).

114–120 (GTHGKTT) is an ATP binding site.

It belongs to the MurCDEF family.

The protein localises to the cytoplasm. The catalysed reaction is UDP-N-acetyl-alpha-D-muramate + L-alanine + ATP = UDP-N-acetyl-alpha-D-muramoyl-L-alanine + ADP + phosphate + H(+). It functions in the pathway cell wall biogenesis; peptidoglycan biosynthesis. In terms of biological role, cell wall formation. The sequence is that of UDP-N-acetylmuramate--L-alanine ligase from Agrobacterium fabrum (strain C58 / ATCC 33970) (Agrobacterium tumefaciens (strain C58)).